The following is a 209-amino-acid chain: Octanoyltransferase (209 aa).

The BPL/LPL catalytic domain occupies 29-209 (EHTPDELWVV…CHQLQPEIDS (181 aa)). Substrate contacts are provided by residues 71 to 78 (RGGQVTYH), 138 to 140 (SLG), and 151 to 153 (GLA). C169 acts as the Acyl-thioester intermediate in catalysis.

Belongs to the LipB family.

Its subcellular location is the cytoplasm. It catalyses the reaction octanoyl-[ACP] + L-lysyl-[protein] = N(6)-octanoyl-L-lysyl-[protein] + holo-[ACP] + H(+). Its pathway is protein modification; protein lipoylation via endogenous pathway; protein N(6)-(lipoyl)lysine from octanoyl-[acyl-carrier-protein]: step 1/2. Its function is as follows. Catalyzes the transfer of endogenously produced octanoic acid from octanoyl-acyl-carrier-protein onto the lipoyl domains of lipoate-dependent enzymes. Lipoyl-ACP can also act as a substrate although octanoyl-ACP is likely to be the physiological substrate. In Hydrogenovibrio crunogenus (strain DSM 25203 / XCL-2) (Thiomicrospira crunogena), this protein is Octanoyltransferase.